We begin with the raw amino-acid sequence, 527 residues long: Inosine-5'-monophosphate dehydrogenase (527 aa).

2 consecutive CBS domains span residues 121–183 (FILD…VTAV) and 184–240 (MSTD…PLAS). Residues 277 to 279 (DSS) and 327 to 329 (GMG) each bind NAD(+). The K(+) site is built by Gly-329 and Gly-331. Residue Ser-332 coordinates IMP. Residue Cys-334 participates in K(+) binding. Cys-334 (thioimidate intermediate) is an active-site residue. IMP is bound by residues 367-369 (DGG) and 390-391 (GS). The active-site Proton acceptor is Arg-440. IMP is bound at residue Gln-452. The tract at residues 506 to 527 (ASAQTEGNVHGLHSHEKKLYSS) is disordered. Residues Glu-511 and Gly-512 each contribute to the K(+) site. The span at 518-527 (HSHEKKLYSS) shows a compositional bias: basic and acidic residues.

This sequence belongs to the IMPDH/GMPR family. In terms of assembly, homotetramer. It depends on K(+) as a cofactor.

The protein localises to the cytoplasm. The catalysed reaction is IMP + NAD(+) + H2O = XMP + NADH + H(+). It functions in the pathway purine metabolism; XMP biosynthesis via de novo pathway; XMP from IMP: step 1/1. With respect to regulation, mycophenolic acid (MPA) is a non-competitive inhibitor that prevents formation of the closed enzyme conformation by binding to the same site as the amobile flap. In contrast, mizoribine monophosphate (MZP) is a competitive inhibitor that induces the closed conformation. MPA is a potent inhibitor of mammalian IMPDHs but a poor inhibitor of the bacterial enzymes. MZP is a more potent inhibitor of bacterial IMPDH. Its function is as follows. Catalyzes the conversion of inosine 5'-phosphate (IMP) to xanthosine 5'-phosphate (XMP), the first committed and rate-limiting step in the de novo synthesis of guanine nucleotides, and therefore plays an important role in the regulation of cell growth. Part of the gene cluster that mediates the biosynthesis of mycophenolic acid (MPA), the first isolated antibiotic natural product in the world. Does not play a role in the biosynthesis of MPA, but is involved in self resistance to MPA, since MPA acts as an inhibitor of IMP dehydrogenases. This Penicillium brevicompactum protein is Inosine-5'-monophosphate dehydrogenase.